A 371-amino-acid polypeptide reads, in one-letter code: Dual-specificity RNA methyltransferase RlmN (371 aa).

Glu114 acts as the Proton acceptor in catalysis. In terms of domain architecture, Radical SAM core spans 120–352 (EEDHFTLCVS…VMTRQSKGAD (233 aa)). An intrachain disulfide couples Cys127 to Cys357. The [4Fe-4S] cluster site is built by Cys134, Cys138, and Cys141. S-adenosyl-L-methionine-binding positions include 183-184 (GE), Ser216, 238-240 (SLN), and Asn314. The active-site S-methylcysteine intermediate is the Cys357.

Belongs to the radical SAM superfamily. RlmN family. It depends on [4Fe-4S] cluster as a cofactor.

It is found in the cytoplasm. The catalysed reaction is adenosine(2503) in 23S rRNA + 2 reduced [2Fe-2S]-[ferredoxin] + 2 S-adenosyl-L-methionine = 2-methyladenosine(2503) in 23S rRNA + 5'-deoxyadenosine + L-methionine + 2 oxidized [2Fe-2S]-[ferredoxin] + S-adenosyl-L-homocysteine. It catalyses the reaction adenosine(37) in tRNA + 2 reduced [2Fe-2S]-[ferredoxin] + 2 S-adenosyl-L-methionine = 2-methyladenosine(37) in tRNA + 5'-deoxyadenosine + L-methionine + 2 oxidized [2Fe-2S]-[ferredoxin] + S-adenosyl-L-homocysteine. In terms of biological role, specifically methylates position 2 of adenine 2503 in 23S rRNA and position 2 of adenine 37 in tRNAs. m2A2503 modification seems to play a crucial role in the proofreading step occurring at the peptidyl transferase center and thus would serve to optimize ribosomal fidelity. The protein is Dual-specificity RNA methyltransferase RlmN of Desulfosudis oleivorans (strain DSM 6200 / JCM 39069 / Hxd3) (Desulfococcus oleovorans).